The chain runs to 208 residues: MAKVSLFKQDGSQAGEVTLNDSVFGIEPNESVVFDVVISQRASLRQGTHAHKNRSAVSGGGKKPWRQKGTGRARQGSTRSPQWRGGGTVFGPNPRSYAYKLPQKVRQLALKSVYSTKVADGKLIAVDTLDFAAPKTAEFAKVISALSIERKVLVVLPNEGNEFAELSARNLENVKVTTANSASVLDIVSADKLLVVQSALTQIEEVLA.

A disordered region spans residues 45–89 (RQGTHAHKNRSAVSGGGKKPWRQKGTGRARQGSTRSPQWRGGGTV).

The protein belongs to the universal ribosomal protein uL4 family. Part of the 50S ribosomal subunit.

One of the primary rRNA binding proteins, this protein initially binds near the 5'-end of the 23S rRNA. It is important during the early stages of 50S assembly. It makes multiple contacts with different domains of the 23S rRNA in the assembled 50S subunit and ribosome. Its function is as follows. Forms part of the polypeptide exit tunnel. In Lactococcus lactis subsp. cremoris (strain SK11), this protein is Large ribosomal subunit protein uL4.